An 808-amino-acid polypeptide reads, in one-letter code: Leucine-rich repeat-containing protein 41 (808 aa).

Positions 45–54 (ALFELCGRAV) are interaction with Elongin BC complex. Residues S155, S276, and S326 each carry the phosphoserine modification. 2 disordered regions span residues 269-289 (ASRG…SRRP) and 304-404 (TRRK…GSGA). T327 carries the phosphothreonine modification. The span at 357–379 (PSSAPTAASSSTSSKRAPASSVS) shows a compositional bias: low complexity. S369 bears the Phosphoserine mark. Residues 383-397 (PLKRFKRATGKKGPR) are compositionally biased toward basic residues. LRR repeat units lie at residues 483-503 (WVSL…IFRL), 514-526 (AGCR…LSDL), 527-551 (FSPL…VLSI), 609-631 (SGSL…FGLV), 632-655 (LQTL…LADC), 697-724 (NSTL…VFSE), and 727-748 (SSSL…LLEF).

In terms of assembly, part of an E3 ubiquitin-protein ligase complex with Elongin BC (ELOB and ELOC), RBX1 and CUL5. Component of a probable ECS(LRRC41) complex which contains CUL5, RNF7/RBX2, Elongin BC and LRRC41. Interacts with CUL5, RNF7, ELOB and ELOC.

It functions in the pathway protein modification; protein ubiquitination. In terms of biological role, probable substrate recognition component of an ECS (Elongin BC-CUL2/5-SOCS-box protein) E3 ubiquitin ligase complex which mediates the ubiquitination and subsequent proteasomal degradation of target proteins. In Rattus norvegicus (Rat), this protein is Leucine-rich repeat-containing protein 41 (Lrrc41).